A 230-amino-acid chain; its full sequence is Ureidoacrylate amidohydrolase RutB (230 aa).

The Proton acceptor role is filled by aspartate 24. Residue lysine 133 is part of the active site. The Nucleophile role is filled by cysteine 166.

This sequence belongs to the isochorismatase family. RutB subfamily.

The enzyme catalyses (Z)-3-ureidoacrylate + H2O + H(+) = (Z)-3-aminoacrylate + NH4(+) + CO2. The catalysed reaction is (Z)-3-ureidoacrylate + H2O = (Z)-3-aminoacrylate + carbamate + H(+). It catalyses the reaction (Z)-2-methylureidoacrylate + H2O + H(+) = (Z)-2-methylaminoacrylate + NH4(+) + CO2. In terms of biological role, hydrolyzes ureidoacrylate to form aminoacrylate and carbamate. The carbamate hydrolyzes spontaneously, thereby releasing one of the nitrogen atoms of the pyrimidine ring as ammonia and one of its carbon atoms as CO2. In Escherichia coli (strain B / BL21-DE3), this protein is Ureidoacrylate amidohydrolase RutB.